A 70-amino-acid polypeptide reads, in one-letter code: MPNQSGSNSSNQLLVPGAAQVIDQMKFEIASEFGVNLGAETTSRANGSVGGEITKRLVSFAQQQMGGGVQ.

The protein belongs to the alpha/beta-type SASP family.

SASP are bound to spore DNA. They are double-stranded DNA-binding proteins that cause DNA to change to an a-like conformation. They protect the DNA backbone from chemical and enzymatic cleavage and are thus involved in dormant spore's high resistance to UV light. This Geobacillus stearothermophilus (Bacillus stearothermophilus) protein is Small, acid-soluble spore protein 1 (sasP-1).